A 663-amino-acid chain; its full sequence is UvrABC system protein B (663 aa).

The Helicase ATP-binding domain maps to 30-417 (EGIKAGKRHQ…TDKMVEQIIR (388 aa)). Position 43-50 (43-50 (GATGTGKT)) interacts with ATP. The Beta-hairpin signature appears at 96 to 119 (YYDYYQPEAYVPSTDTFIEKDASI). Positions 434 to 600 (QIDDLLSEIQ…TINKKIHDLI (167 aa)) constitute a Helicase C-terminal domain. A UVR domain is found at 627-662 (QKTIDNIEKEMKQAAKDLDFEKATELRDMLFELKAE).

It belongs to the UvrB family. As to quaternary structure, forms a heterotetramer with UvrA during the search for lesions. Interacts with UvrC in an incision complex.

It is found in the cytoplasm. Functionally, the UvrABC repair system catalyzes the recognition and processing of DNA lesions. A damage recognition complex composed of 2 UvrA and 2 UvrB subunits scans DNA for abnormalities. Upon binding of the UvrA(2)B(2) complex to a putative damaged site, the DNA wraps around one UvrB monomer. DNA wrap is dependent on ATP binding by UvrB and probably causes local melting of the DNA helix, facilitating insertion of UvrB beta-hairpin between the DNA strands. Then UvrB probes one DNA strand for the presence of a lesion. If a lesion is found the UvrA subunits dissociate and the UvrB-DNA preincision complex is formed. This complex is subsequently bound by UvrC and the second UvrB is released. If no lesion is found, the DNA wraps around the other UvrB subunit that will check the other stand for damage. In Staphylococcus aureus (strain COL), this protein is UvrABC system protein B.